Reading from the N-terminus, the 98-residue chain is Integration host factor subunit beta (98 aa).

Belongs to the bacterial histone-like protein family. As to quaternary structure, heterodimer of an alpha and a beta chain.

In terms of biological role, this protein is one of the two subunits of integration host factor, a specific DNA-binding protein that functions in genetic recombination as well as in transcriptional and translational control. This chain is Integration host factor subunit beta, found in Hahella chejuensis (strain KCTC 2396).